The sequence spans 476 residues: Chromosomal replication initiator protein DnaA (476 aa).

The interval 1–87 is domain I, interacts with DnaA modulators; sequence MSDRSDPTHA…AGVSNFAIVV (87 aa). The interval 87–131 is domain II; that stretch reads VNPGIAQDAFAQHPEPAEQPYIETPTITAPTDNPGLPASPSRGDS. The tract at residues 132–348 is domain III, AAA+ region; that stretch reads RLNPKYGFDT…GTLIRVTAFA (217 aa). ATP contacts are provided by Gly-176, Gly-178, Lys-179, and Thr-180. A domain IV, binds dsDNA region spans residues 349-476; sequence SLNKTPVDLA…IKQNHRYGKM (128 aa).

Belongs to the DnaA family. As to quaternary structure, oligomerizes as a right-handed, spiral filament on DNA at oriC.

The protein localises to the cytoplasm. In terms of biological role, plays an essential role in the initiation and regulation of chromosomal replication. ATP-DnaA binds to the origin of replication (oriC) to initiate formation of the DNA replication initiation complex once per cell cycle. Binds the DnaA box (a 9 base pair repeat at the origin) and separates the double-stranded (ds)DNA. Forms a right-handed helical filament on oriC DNA; dsDNA binds to the exterior of the filament while single-stranded (ss)DNA is stabiized in the filament's interior. The ATP-DnaA-oriC complex binds and stabilizes one strand of the AT-rich DNA unwinding element (DUE), permitting loading of DNA polymerase. After initiation quickly degrades to an ADP-DnaA complex that is not apt for DNA replication. Binds acidic phospholipids. This Clavibacter sepedonicus (Clavibacter michiganensis subsp. sepedonicus) protein is Chromosomal replication initiator protein DnaA.